We begin with the raw amino-acid sequence, 224 residues long: MLGSPKLTARQQQILDLIQNAITLTGSPPTRAEIATELGFRSANAAEEHLQALARKGAIELVSGTSRGIRLKSEALRSINESRSKQFPLSLPGLSQLMLPLIGRVAAGSPILAQEHIDQTYYVESSLFQRKPDYLLKVRGMSMRDAGIMDGDLLAVQSTRDAKNGQIVVARLGDEVTVKRFRRTKDLIELCPENPDYQIIVVEPGEPFEIEGLAVGLIRNTMLM.

Residues 31–51 constitute a DNA-binding region (H-T-H motif); that stretch reads RAEIATELGFRSANAAEEHLQ. Residues S142 and K179 each act as for autocatalytic cleavage activity in the active site.

It belongs to the peptidase S24 family. Homodimer.

The catalysed reaction is Hydrolysis of Ala-|-Gly bond in repressor LexA.. Its function is as follows. Represses a number of genes involved in the response to DNA damage (SOS response), including recA and lexA. In the presence of single-stranded DNA, RecA interacts with LexA causing an autocatalytic cleavage which disrupts the DNA-binding part of LexA, leading to derepression of the SOS regulon and eventually DNA repair. This chain is LexA repressor, found in Albidiferax ferrireducens (strain ATCC BAA-621 / DSM 15236 / T118) (Rhodoferax ferrireducens).